A 402-amino-acid chain; its full sequence is CinA-like protein (402 aa).

Belongs to the CinA family.

The protein is CinA-like protein of Deinococcus deserti (strain DSM 17065 / CIP 109153 / LMG 22923 / VCD115).